We begin with the raw amino-acid sequence, 128 residues long: Large ribosomal subunit protein bL17 (128 aa).

The protein belongs to the bacterial ribosomal protein bL17 family. As to quaternary structure, part of the 50S ribosomal subunit. Contacts protein L32.

This chain is Large ribosomal subunit protein bL17, found in Streptococcus thermophilus (strain ATCC BAA-250 / LMG 18311).